A 212-amino-acid polypeptide reads, in one-letter code: MNYPHPIIAREGWPFIAIAAVVALLIHFFAGFGVSWLFWLLLIFVVQFFRDPARPIPTQANAVLCPADGRIVAVETAHDPYANREALKISVFMNVFNVHSQRSPVDGAISKVEYFPGAYLNAAVDKASTENERNAIVIETAGGQTVTSVQIAGLIARRILCYVRAGEPLTRGQRYGFIRFGSRVDVYLPVGSRPRVSIGEKVSASSTILAEL.

Serine 182 (schiff-base intermediate with substrate; via pyruvic acid) is an active-site residue. Serine 182 bears the Pyruvic acid (Ser); by autocatalysis mark.

This sequence belongs to the phosphatidylserine decarboxylase family. PSD-A subfamily. In terms of assembly, heterodimer of a large membrane-associated beta subunit and a small pyruvoyl-containing alpha subunit. Pyruvate serves as cofactor. Is synthesized initially as an inactive proenzyme. Formation of the active enzyme involves a self-maturation process in which the active site pyruvoyl group is generated from an internal serine residue via an autocatalytic post-translational modification. Two non-identical subunits are generated from the proenzyme in this reaction, and the pyruvate is formed at the N-terminus of the alpha chain, which is derived from the carboxyl end of the proenzyme. The post-translation cleavage follows an unusual pathway, termed non-hydrolytic serinolysis, in which the side chain hydroxyl group of the serine supplies its oxygen atom to form the C-terminus of the beta chain, while the remainder of the serine residue undergoes an oxidative deamination to produce ammonia and the pyruvoyl prosthetic group on the alpha chain.

It localises to the cell membrane. It carries out the reaction a 1,2-diacyl-sn-glycero-3-phospho-L-serine + H(+) = a 1,2-diacyl-sn-glycero-3-phosphoethanolamine + CO2. Its pathway is phospholipid metabolism; phosphatidylethanolamine biosynthesis; phosphatidylethanolamine from CDP-diacylglycerol: step 2/2. In terms of biological role, catalyzes the formation of phosphatidylethanolamine (PtdEtn) from phosphatidylserine (PtdSer). The protein is Phosphatidylserine decarboxylase proenzyme of Paraburkholderia xenovorans (strain LB400).